The primary structure comprises 265 residues: Hemin import ATP-binding protein HmuV (265 aa).

An ABC transporter domain is found at 13–249 (LKASNLHLQL…TAVENVYGWP (237 aa)). 45–52 (GPNGAGKS) is an ATP binding site.

It belongs to the ABC transporter superfamily. Heme (hemin) importer (TC 3.A.1.14.5) family. The complex is composed of two ATP-binding proteins (HmuV), two transmembrane proteins (HmuU) and a solute-binding protein (HmuT).

It localises to the cell inner membrane. Its function is as follows. Part of the ABC transporter complex HmuTUV involved in hemin import. Responsible for energy coupling to the transport system. This chain is Hemin import ATP-binding protein HmuV, found in Photobacterium damselae subsp. damselae (Listonella damsela).